The following is a 160-amino-acid chain: Coat protein TP3 (160 aa).

It localises to the virion. This is Coat protein TP3 from Thermoproteus tenax (TTV1).